A 242-amino-acid polypeptide reads, in one-letter code: Proteasome subunit beta type-4 (242 aa).

Positions 1–23 are excised as a propeptide; sequence ESVARGTAPGELHCFPGAGPVRH. Threonine 24 serves as the catalytic Nucleophile.

It belongs to the peptidase T1B family. In terms of assembly, the 26S proteasome consists of a 20S proteasome core and two 19S regulatory subunits. The 20S proteasome core is composed of 28 subunits that are arranged in four stacked rings, resulting in a barrel-shaped structure. The two end rings are each formed by seven alpha subunits, and the two central rings are each formed by seven beta subunits. The catalytic chamber with the active sites is on the inside of the barrel.

It is found in the cytoplasm. The protein localises to the nucleus. Non-catalytic component of the proteasome, a multicatalytic proteinase complex which is characterized by its ability to cleave peptides with Arg, Phe, Tyr, Leu, and Glu adjacent to the leaving group at neutral or slightly basic pH. The proteasome has an ATP-dependent proteolytic activity. The protein is Proteasome subunit beta type-4 (psmb4) of Xenopus laevis (African clawed frog).